The chain runs to 238 residues: tRNA (guanine-N(7)-)-methyltransferase (238 aa).

Residues glutamate 62, glutamate 87, aspartate 119, and aspartate 141 each contribute to the S-adenosyl-L-methionine site. Aspartate 141 is a catalytic residue. Residues lysine 145, aspartate 177, and 216–219 (TRYE) each bind substrate.

It belongs to the class I-like SAM-binding methyltransferase superfamily. TrmB family.

The catalysed reaction is guanosine(46) in tRNA + S-adenosyl-L-methionine = N(7)-methylguanosine(46) in tRNA + S-adenosyl-L-homocysteine. The protein operates within tRNA modification; N(7)-methylguanine-tRNA biosynthesis. Its function is as follows. Catalyzes the formation of N(7)-methylguanine at position 46 (m7G46) in tRNA. This Novosphingobium aromaticivorans (strain ATCC 700278 / DSM 12444 / CCUG 56034 / CIP 105152 / NBRC 16084 / F199) protein is tRNA (guanine-N(7)-)-methyltransferase.